A 178-amino-acid chain; its full sequence is Fatty-acid and retinol-binding protein 1 (178 aa).

The signal sequence occupies residues 1–16; the sequence is MYHQLILMALIGVIMA. Residues Asn-44 and Asn-75 are each glycosylated (N-linked (GlcNAc...) asparagine). Coiled coils occupy residues 67-89 and 122-154; these read DAAL…ELRN and QKLD…LKAT. An N-linked (GlcNAc...) asparagine glycan is attached at Asn-157.

Belongs to the fatty-acid and retinol-binding protein (FARBP) family. N-glycosylated.

Its subcellular location is the secreted. Functionally, binds retinol and different fatty acids. This Onchocerca ochengi (Filarial nematode worm) protein is Fatty-acid and retinol-binding protein 1.